The sequence spans 290 residues: Acetyl-coenzyme A carboxylase carboxyl transferase subunit beta (290 aa).

The CoA carboxyltransferase N-terminal domain occupies 27–290 (LWVKCPSCES…LQKQPADAVA (264 aa)). Positions 31, 34, 50, and 53 each coordinate Zn(2+). The C4-type zinc finger occupies 31–53 (CPSCESTLYRTDVEANLHVCPKC).

Belongs to the AccD/PCCB family. In terms of assembly, acetyl-CoA carboxylase is a heterohexamer composed of biotin carboxyl carrier protein (AccB), biotin carboxylase (AccC) and two subunits each of ACCase subunit alpha (AccA) and ACCase subunit beta (AccD). Zn(2+) serves as cofactor.

Its subcellular location is the cytoplasm. The catalysed reaction is N(6)-carboxybiotinyl-L-lysyl-[protein] + acetyl-CoA = N(6)-biotinyl-L-lysyl-[protein] + malonyl-CoA. The protein operates within lipid metabolism; malonyl-CoA biosynthesis; malonyl-CoA from acetyl-CoA: step 1/1. In terms of biological role, component of the acetyl coenzyme A carboxylase (ACC) complex. Biotin carboxylase (BC) catalyzes the carboxylation of biotin on its carrier protein (BCCP) and then the CO(2) group is transferred by the transcarboxylase to acetyl-CoA to form malonyl-CoA. The protein is Acetyl-coenzyme A carboxylase carboxyl transferase subunit beta of Cupriavidus taiwanensis (strain DSM 17343 / BCRC 17206 / CCUG 44338 / CIP 107171 / LMG 19424 / R1) (Ralstonia taiwanensis (strain LMG 19424)).